The following is a 1436-amino-acid chain: Gag-Pol polyprotein (1436 aa).

Gly2 carries the N-myristoyl glycine; by host lipid modification. An interaction with Gp41 region spans residues 7–31 (VLSGGKLDKWEKIRLRPRGKKRYKL). The segment at 8 to 43 (LSGGKLDKWEKIRLRPRGKKRYKLKHIVWASRELER) is interaction with host CALM1. The tract at residues 12–19 (KLDKWEKI) is interaction with host AP3D1. Residues 14-33 (DKWEKIRLRPRGKKRYKLKH) form an interaction with membrane phosphatidylinositol 4,5-bisphosphate and RNA region. A Nuclear export signal motif is present at residues 16–22 (WEKIRLR). The Nuclear localization signal motif lies at 26-32 (KKRYKLK). The tract at residues 73 to 77 (EELKS) is interaction with membrane phosphatidylinositol 4,5-bisphosphate. Residues 106–128 (EEQNKSKKKAQQAAADTGNGSQV) are disordered. At Tyr132 the chain carries Phosphotyrosine; by host. The interval 189–227 (NTVGGHQAAMQMLKETINEEAAEWDRLHPVHAGPIAPGQ) is interaction with human PPIA/CYPA and NUP153. Residues 277-363 (YSPISILDIR…GGPSHKARIL (87 aa)) form a dimerization/Multimerization of capsid protein p24 region. CCHC-type zinc fingers lie at residues 390 to 407 (VKCFNCGKVGHIAKNCRA) and 411 to 428 (KGCWKCGKEGHQMKDCTN). Residues 446 to 465 (KARELSSEQTRANSPTRREL) are disordered. The tract at residues 490–494 (PQITL) is dimerization of protease. The region spanning 509–578 (KEALLDTGAD…TPVNIIGRNL (70 aa)) is the Peptidase A2 domain. Catalysis depends on Asp514, which acts as the For protease activity; shared with dimeric partner. Dimerization of protease stretches follow at residues 538 to 544 (GIGGFIK) and 577 to 589 (NLLTQIGCTLNFP). A Reverse transcriptase domain is found at 632 to 822 (EGKISKIGPE…PPFLWMGYEL (191 aa)). Mg(2+)-binding residues include Asp698, Asp773, and Asp774. An RT 'primer grip' region spans residues 815–823 (FLWMGYELH). The Tryptophan repeat motif signature appears at 986-1002 (WEAWWTEYWQATWIPEW). The RNase H type-1 domain maps to 1022 to 1145 (IIGAETFYVD…VDRLVSTGIR (124 aa)). Mg(2+) contacts are provided by Asp1031, Glu1066, Asp1086, and Asp1137. An Integrase-type zinc finger spans residues 1151–1192 (DGIDKAQDEHEKYHSNWRAMASDFNLPPVVAKEIVASCDKCQ). His1160, His1164, Cys1188, and Cys1191 together coordinate Zn(2+). Residues 1202–1352 (VDCSPGIWQL…SAGERIVDII (151 aa)) enclose the Integrase catalytic domain. Mg(2+)-binding residues include Asp1212, Asp1264, and Glu1300. Positions 1371–1418 (FRVYYRDSRDPLWKGHAKLLWKGEGAVVIQDNSDIKVVPRRKAKIIRD) form a DNA-binding region, integrase-type.

As to quaternary structure, homotrimer; further assembles as hexamers of trimers. Interacts with gp41 (via C-terminus). Interacts with host CALM1; this interaction induces a conformational change in the Matrix protein, triggering exposure of the myristate group. Interacts with host AP3D1; this interaction allows the polyprotein trafficking to multivesicular bodies during virus assembly. Part of the pre-integration complex (PIC) which is composed of viral genome, matrix protein, Vpr and integrase. In terms of assembly, homodimer; the homodimer further multimerizes as homohexamers or homopentamers. Interacts with human PPIA/CYPA; This interaction stabilizes the capsid. Interacts with human NUP153. Interacts with host PDZD8; this interaction stabilizes the capsid. Interacts with monkey TRIM5; this interaction destabilizes the capsid. Homodimer, whose active site consists of two apposed aspartic acid residues. As to quaternary structure, heterodimer of p66 RT and p51 RT (RT p66/p51). Heterodimerization of RT is essential for DNA polymerase activity. The overall folding of the subdomains is similar in p66 RT and p51 RT but the spatial arrangements of the subdomains are dramatically different. In terms of assembly, homotetramer; may further associate as a homohexadecamer. Part of the pre-integration complex (PIC) which is composed of viral genome, matrix protein, Vpr and integrase. Interacts with human SMARCB1/INI1 and human PSIP1/LEDGF isoform 1. Interacts with human KPNA3; this interaction might play a role in nuclear import of the pre-integration complex. Interacts with human NUP153; this interaction might play a role in nuclear import of the pre-integration complex. Mg(2+) serves as cofactor. Post-translationally, specific enzymatic cleavages by the viral protease yield mature proteins. The protease is released by autocatalytic cleavage. The polyprotein is cleaved during and after budding, this process is termed maturation. Proteolytic cleavage of p66 RT removes the RNase H domain to yield the p51 RT subunit. Nucleocapsid protein p7 might be further cleaved after virus entry. In terms of processing, tyrosine phosphorylated presumably in the virion by a host kinase. Phosphorylation is apparently not a major regulator of membrane association. Phosphorylated possibly by host MAPK1; this phosphorylation is necessary for Pin1-mediated virion uncoating. Post-translationally, methylated by host PRMT6, impairing its function by reducing RNA annealing and the initiation of reverse transcription.

It is found in the host cell membrane. The protein resides in the host endosome. It localises to the host multivesicular body. The protein localises to the virion membrane. Its subcellular location is the host nucleus. It is found in the host cytoplasm. The protein resides in the virion. It carries out the reaction Specific for a P1 residue that is hydrophobic, and P1' variable, but often Pro.. It catalyses the reaction Endohydrolysis of RNA in RNA/DNA hybrids. Three different cleavage modes: 1. sequence-specific internal cleavage of RNA. Human immunodeficiency virus type 1 and Moloney murine leukemia virus enzymes prefer to cleave the RNA strand one nucleotide away from the RNA-DNA junction. 2. RNA 5'-end directed cleavage 13-19 nucleotides from the RNA end. 3. DNA 3'-end directed cleavage 15-20 nucleotides away from the primer terminus.. The enzyme catalyses 3'-end directed exonucleolytic cleavage of viral RNA-DNA hybrid.. The catalysed reaction is DNA(n) + a 2'-deoxyribonucleoside 5'-triphosphate = DNA(n+1) + diphosphate. Its activity is regulated as follows. Protease: The viral protease is inhibited by many synthetic protease inhibitors (PIs), such as amprenavir, atazanavir, indinavir, loprinavir, nelfinavir, ritonavir and saquinavir. Use of protease inhibitors in tritherapy regimens permit more ambitious therapeutic strategies. Reverse transcriptase/ribonuclease H: RT can be inhibited either by nucleoside RT inhibitors (NRTIs) or by non nucleoside RT inhibitors (NNRTIs). NRTIs act as chain terminators, whereas NNRTIs inhibit DNA polymerization by binding a small hydrophobic pocket near the RT active site and inducing an allosteric change in this region. Classical NRTIs are abacavir, adefovir (PMEA), didanosine (ddI), lamivudine (3TC), stavudine (d4T), tenofovir (PMPA), zalcitabine (ddC), and zidovudine (AZT). Classical NNRTIs are atevirdine (BHAP U-87201E), delavirdine, efavirenz (DMP-266), emivirine (I-EBU), and nevirapine (BI-RG-587). The tritherapies used as a basic effective treatment of AIDS associate two NRTIs and one NNRTI. In terms of biological role, mediates, with Gag polyprotein, the essential events in virion assembly, including binding the plasma membrane, making the protein-protein interactions necessary to create spherical particles, recruiting the viral Env proteins, and packaging the genomic RNA via direct interactions with the RNA packaging sequence (Psi). Gag-Pol polyprotein may regulate its own translation, by the binding genomic RNA in the 5'-UTR. At low concentration, the polyprotein would promote translation, whereas at high concentration, the polyprotein would encapsidate genomic RNA and then shut off translation. Targets the polyprotein to the plasma membrane via a multipartite membrane-binding signal, that includes its myristoylated N-terminus. Matrix protein is part of the pre-integration complex. Implicated in the release from host cell mediated by Vpu. Binds to RNA. Functionally, forms the conical core that encapsulates the genomic RNA-nucleocapsid complex in the virion. Most core are conical, with only 7% tubular. The core is constituted by capsid protein hexamer subunits. The core is disassembled soon after virion entry. Host restriction factors such as TRIM5-alpha or TRIMCyp bind retroviral capsids and cause premature capsid disassembly, leading to blocks in reverse transcription. Capsid restriction by TRIM5 is one of the factors which restricts HIV-1 to the human species. Host PIN1 apparently facilitates the virion uncoating. On the other hand, interactions with PDZD8 or CYPA stabilize the capsid. Its function is as follows. Encapsulates and protects viral dimeric unspliced genomic RNA (gRNA). Binds these RNAs through its zinc fingers. Acts as a nucleic acid chaperone which is involved in rearangement of nucleic acid secondary structure during gRNA retrotranscription. Also facilitates template switch leading to recombination. As part of the polyprotein, participates in gRNA dimerization, packaging, tRNA incorporation and virion assembly. In terms of biological role, aspartyl protease that mediates proteolytic cleavages of Gag and Gag-Pol polyproteins during or shortly after the release of the virion from the plasma membrane. Cleavages take place as an ordered, step-wise cascade to yield mature proteins. This process is called maturation. Displays maximal activity during the budding process just prior to particle release from the cell. Also cleaves Nef and Vif, probably concomitantly with viral structural proteins on maturation of virus particles. Hydrolyzes host EIF4GI and PABP1 in order to shut off the capped cellular mRNA translation. The resulting inhibition of cellular protein synthesis serves to ensure maximal viral gene expression and to evade host immune response. Also mediates cleavage of host YTHDF3. Mediates cleavage of host CARD8, thereby activating the CARD8 inflammasome, leading to the clearance of latent HIV-1 in patient CD4(+) T-cells after viral reactivation; in contrast, HIV-1 can evade CARD8-sensing when its protease remains inactive in infected cells prior to viral budding. Multifunctional enzyme that converts the viral RNA genome into dsDNA in the cytoplasm, shortly after virus entry into the cell. This enzyme displays a DNA polymerase activity that can copy either DNA or RNA templates, and a ribonuclease H (RNase H) activity that cleaves the RNA strand of RNA-DNA heteroduplexes in a partially processive 3' to 5' endonucleasic mode. Conversion of viral genomic RNA into dsDNA requires many steps. A tRNA(3)-Lys binds to the primer-binding site (PBS) situated at the 5'-end of the viral RNA. RT uses the 3' end of the tRNA primer to perform a short round of RNA-dependent minus-strand DNA synthesis. The reading proceeds through the U5 region and ends after the repeated (R) region which is present at both ends of viral RNA. The portion of the RNA-DNA heteroduplex is digested by the RNase H, resulting in a ssDNA product attached to the tRNA primer. This ssDNA/tRNA hybridizes with the identical R region situated at the 3' end of viral RNA. This template exchange, known as minus-strand DNA strong stop transfer, can be either intra- or intermolecular. RT uses the 3' end of this newly synthesized short ssDNA to perform the RNA-dependent minus-strand DNA synthesis of the whole template. RNase H digests the RNA template except for two polypurine tracts (PPTs) situated at the 5'-end and near the center of the genome. It is not clear if both polymerase and RNase H activities are simultaneous. RNase H probably can proceed both in a polymerase-dependent (RNA cut into small fragments by the same RT performing DNA synthesis) and a polymerase-independent mode (cleavage of remaining RNA fragments by free RTs). Secondly, RT performs DNA-directed plus-strand DNA synthesis using the PPTs that have not been removed by RNase H as primers. PPTs and tRNA primers are then removed by RNase H. The 3' and 5' ssDNA PBS regions hybridize to form a circular dsDNA intermediate. Strand displacement synthesis by RT to the PBS and PPT ends produces a blunt ended, linear dsDNA copy of the viral genome that includes long terminal repeats (LTRs) at both ends. Functionally, catalyzes viral DNA integration into the host chromosome, by performing a series of DNA cutting and joining reactions. This enzyme activity takes place after virion entry into a cell and reverse transcription of the RNA genome in dsDNA. The first step in the integration process is 3' processing. This step requires a complex comprising the viral genome, matrix protein, Vpr and integrase. This complex is called the pre-integration complex (PIC). The integrase protein removes 2 nucleotides from each 3' end of the viral DNA, leaving recessed CA OH's at the 3' ends. In the second step, the PIC enters cell nucleus. This process is mediated through integrase and Vpr proteins, and allows the virus to infect a non dividing cell. This ability to enter the nucleus is specific of lentiviruses, other retroviruses cannot and rely on cell division to access cell chromosomes. In the third step, termed strand transfer, the integrase protein joins the previously processed 3' ends to the 5' ends of strands of target cellular DNA at the site of integration. The 5'-ends are produced by integrase-catalyzed staggered cuts, 5 bp apart. A Y-shaped, gapped, recombination intermediate results, with the 5'-ends of the viral DNA strands and the 3' ends of target DNA strands remaining unjoined, flanking a gap of 5 bp. The last step is viral DNA integration into host chromosome. This involves host DNA repair synthesis in which the 5 bp gaps between the unjoined strands are filled in and then ligated. Since this process occurs at both cuts flanking the HIV genome, a 5 bp duplication of host DNA is produced at the ends of HIV-1 integration. Alternatively, Integrase may catalyze the excision of viral DNA just after strand transfer, this is termed disintegration. This chain is Gag-Pol polyprotein (gag-pol), found in Human immunodeficiency virus type 1 group M subtype B (isolate RF/HAT3) (HIV-1).